A 277-amino-acid chain; its full sequence is Putative hydroxypyruvate isomerase (277 aa).

Catalysis depends on proton donor/acceptor residues Glu-150 and Glu-249.

Belongs to the hyi family.

The enzyme catalyses 3-hydroxypyruvate = 2-hydroxy-3-oxopropanoate. Functionally, catalyzes the reversible isomerization between hydroxypyruvate and 2-hydroxy-3-oxopropanoate (also termed tartronate semialdehyde). The polypeptide is Putative hydroxypyruvate isomerase (HYI) (Homo sapiens (Human)).